Consider the following 789-residue polypeptide: Leucine-rich repeat and fibronectin type-III domain-containing protein 2 (789 aa).

Positions 1-20 are cleaved as a signal peptide; that stretch reads METLLGGLLAFGMAFAVVDA. The LRRNT domain maps to 21–52; the sequence is CPKYCVCQNLSESLGTLCPSKGLLFVPPDIDR. The Extracellular portion of the chain corresponds to 21 to 534; the sequence is CPKYCVCQNL…MHSQILGGTM (514 aa). N29 carries N-linked (GlcNAc...) asparagine glycosylation. LRR repeat units lie at residues 53-74, 77-98, 101-122, 125-146, 150-171, 174-195, and 198-219; these read RTVE…DFAN, GLVD…SFLD, SLRS…TLRG, NLQH…AFED, TLED…SVRR, NLHQ…TFAD, and KLAR…PIFA. In terms of domain architecture, LRRCT spans 242–288; it reads NPLHCNCELLWLRRLERDDDLETCGSPGGLKGRYFWHVREEEFVCEP. In terms of domain architecture, Ig-like spans 289-375; it reads PLITQHTHKL…GEATAMVEVS (87 aa). Cysteines 310 and 359 form a disulfide. N332, N341, and N384 each carry an N-linked (GlcNAc...) asparagine glycan. The segment at 383 to 424 is disordered; that stretch reads SNSTSRTAPPKSRLSDITGSSKTSRGGGGSGGGEPPKSPPER. A compositionally biased stretch (gly residues) spans 407–416; the sequence is RGGGGSGGGE. In terms of domain architecture, Fibronectin type-III spans 421 to 518; sequence PPERAVLVSE…GCAQFFTKAD (98 aa). Residues 535–555 form a helical membrane-spanning segment; the sequence is ILVIGGIIVATLLVFIVILMV. Residues 556–789 lie on the Cytoplasmic side of the membrane; that stretch reads RYKVCNHEAP…SSEWVMESTV (234 aa). 3 disordered regions span residues 577-602, 619-654, and 668-702; these read SQTN…PPKV, SDSS…PSLD, and QRKE…LGPP. Residues 583 to 599 are compositionally biased toward pro residues; the sequence is QPPPPSSAPAGAPPQGP. Low complexity predominate over residues 619–638; the sequence is SDSSSSSSLGSGEAAGLGRA. Positions 641 to 650 are enriched in pro residues; sequence RIPPSAPRPK. A PDZ-binding motif is present at residues 786 to 789; sequence ESTV.

Belongs to the LRFN family. Forms heteromeric complexes with LRFN1, LRFN3, LRFN4 and LRFN5. Can form homomeric complexes, but not across cell junctions. Directly interacts with 2 NMDA receptor subunits GRIN1 and GRIN2A. Interacts with DLG1, DLG2, DLG3 and DLG4. Glycosylated.

Its subcellular location is the membrane. It is found in the synapse. The protein localises to the postsynaptic cell membrane. In terms of biological role, promotes neurite outgrowth in hippocampal neurons. Enhances the cell surface expression of 2 NMDA receptor subunits GRIN1 and GRIN2A. May play a role in redistributing DLG4 to the cell periphery. The sequence is that of Leucine-rich repeat and fibronectin type-III domain-containing protein 2 (LRFN2) from Homo sapiens (Human).